The primary structure comprises 278 residues: Polyamine aminopropyltransferase (278 aa).

The region spanning 5-238 (ELWFTEQQTP…GLWSFTMGSK (234 aa)) is the PABS domain. Gln-34 serves as a coordination point for S-methyl-5'-thioadenosine. Residues His-65 and Asp-89 each coordinate spermidine. S-methyl-5'-thioadenosine contacts are provided by residues Glu-109 and 140–141 (DG). The Proton acceptor role is filled by Asp-158. 158–161 (DSTD) is a binding site for spermidine. Pro-165 provides a ligand contact to S-methyl-5'-thioadenosine.

The protein belongs to the spermidine/spermine synthase family. As to quaternary structure, homodimer or homotetramer.

It is found in the cytoplasm. The enzyme catalyses S-adenosyl 3-(methylsulfanyl)propylamine + putrescine = S-methyl-5'-thioadenosine + spermidine + H(+). Its pathway is amine and polyamine biosynthesis; spermidine biosynthesis; spermidine from putrescine: step 1/1. In terms of biological role, catalyzes the irreversible transfer of a propylamine group from the amino donor S-adenosylmethioninamine (decarboxy-AdoMet) to putrescine (1,4-diaminobutane) to yield spermidine. The chain is Polyamine aminopropyltransferase from Caldicellulosiruptor saccharolyticus (strain ATCC 43494 / DSM 8903 / Tp8T 6331).